A 183-amino-acid polypeptide reads, in one-letter code: Large ribosomal subunit protein uL6 (183 aa).

Belongs to the universal ribosomal protein uL6 family. In terms of assembly, part of the 50S ribosomal subunit.

Its function is as follows. This protein binds to the 23S rRNA, and is important in its secondary structure. It is located near the subunit interface in the base of the L7/L12 stalk, and near the tRNA binding site of the peptidyltransferase center. This chain is Large ribosomal subunit protein uL6, found in Parabacteroides distasonis (strain ATCC 8503 / DSM 20701 / CIP 104284 / JCM 5825 / NCTC 11152).